Reading from the N-terminus, the 398-residue chain is Phosphoglycerate kinase (398 aa).

Substrate contacts are provided by residues 23-25 (DLN), arginine 38, 61-64 (HFGR), arginine 119, and arginine 152. ATP is bound by residues lysine 202, glutamate 324, and 354-357 (GGDT).

The protein belongs to the phosphoglycerate kinase family. As to quaternary structure, monomer.

Its subcellular location is the cytoplasm. It catalyses the reaction (2R)-3-phosphoglycerate + ATP = (2R)-3-phospho-glyceroyl phosphate + ADP. It functions in the pathway carbohydrate degradation; glycolysis; pyruvate from D-glyceraldehyde 3-phosphate: step 2/5. This chain is Phosphoglycerate kinase, found in Bradyrhizobium diazoefficiens (strain JCM 10833 / BCRC 13528 / IAM 13628 / NBRC 14792 / USDA 110).